The primary structure comprises 308 residues: uncharacterized protein (308 aa).

Positions 5-236 (LELQQLKKTY…LKSETFILDL (232 aa)) constitute an ABC transporter domain. Position 38 to 45 (38 to 45 (GPNGAGKS)) interacts with ATP.

Belongs to the ABC transporter superfamily.

This is an uncharacterized protein from Escherichia coli (strain K12).